Here is a 396-residue protein sequence, read N- to C-terminus: MAKAKFERTKPHVNIGTIGHVDHGKTTLTAAITKVLADKYPDLNQSFAFDQIDKAPEEKARGITINISHVEYQTEKRHYAHVDAPGHADYIKNMITGAAQMDGAILVVAATDGPMPQTREHVLLARQVGVPYILVALNKADMVDDEEILELVEMEVRELLAAQEFDEEAPVVRVSGLKALEGDPKWVKSVEDLMDAVDESIPDPVRETDKPFLMPIEDVFTITGRGTVVTGRVERGIINVNEEVEITGIRPETTKTTVTGIEMFRKLLDQGQAGDNVGLLIRGIKREDVERGQVVIKPGTTTPHTEFEGQAYILSKDEGGRHTPFFNNYRPQFYFRTTDVTGVVTLPEGTEMVMPGDNTEMSVKLIQPVAMEEGLRFAIREGGRTVGAGRVTKIIK.

Positions 10–205 constitute a tr-type G domain; that stretch reads KPHVNIGTIG…AVDESIPDPV (196 aa). Residues 19–26 form a G1 region; it reads GHVDHGKT. 19–26 serves as a coordination point for GTP; that stretch reads GHVDHGKT. Thr-26 contributes to the Mg(2+) binding site. Residues 62–66 are G2; that stretch reads GITIN. A G3 region spans residues 83-86; it reads DAPG. GTP contacts are provided by residues 83–87 and 138–141; these read DAPGH and NKAD. Positions 138 to 141 are G4; the sequence is NKAD. Residues 175–177 form a G5 region; it reads SGL.

This sequence belongs to the TRAFAC class translation factor GTPase superfamily. Classic translation factor GTPase family. EF-Tu/EF-1A subfamily. In terms of assembly, monomer.

Its subcellular location is the cytoplasm. The enzyme catalyses GTP + H2O = GDP + phosphate + H(+). GTP hydrolase that promotes the GTP-dependent binding of aminoacyl-tRNA to the A-site of ribosomes during protein biosynthesis. This Nocardia farcinica (strain IFM 10152) protein is Elongation factor Tu.